The chain runs to 531 residues: Protein SIS2 (531 aa).

Basic and acidic residues predominate over residues 1 to 20 (MPSDKDIKSPAQPKKEEEIP). 5 disordered regions span residues 1 to 42 (MPSD…ANII), 88 to 127 (SPDS…KSPS), 139 to 168 (RPVR…EPSS), 180 to 261 (SLRA…DPRL), and 461 to 531 (YPED…TTNL). Over residues 155–168 (LTPITSPQHSEPSS) the composition is skewed to polar residues. Positions 183-198 (ATTNSISSAAASNQST) are enriched in low complexity. Gly residues predominate over residues 204-213 (SGGGGGGGGA). A compositionally biased stretch (low complexity) spans 214-249 (NTATSSNSTTSNTALAAQGTTTTTTTTNSNSNTTTT). Acidic residues-rich tracts occupy residues 462-472 (PEDEDEDEADD) and 481-514 (AIID…EEDP).

The protein belongs to the HFCD (homooligomeric flavin containing Cys decarboxylase) superfamily.

Its subcellular location is the nucleus. The protein resides in the cytoplasm. Functionally, may stimulate expression of certain genes that are periodically expressed during late G1. Also modulates the expression of the ENA1 ATPase. The polypeptide is Protein SIS2 (SIS2) (Candida tropicalis (Yeast)).